Consider the following 421-residue polypeptide: Proton/sodium-glutamate symport protein (421 aa).

Residues 1 to 3 (MRK) are Cytoplasmic-facing. The helical transmembrane segment at 4–24 (IGLAWQIFIGLILGIIVGAIF) threads the bilayer. Topologically, residues 25–43 (YGNPKVAAYLQPIGDIFLR) are extracellular. The chain crosses the membrane as a helical span at residues 44–64 (LIKMIVIPIVISSLVVGVASV). Residues 65-77 (GDLKKLGKLGGKT) lie on the Cytoplasmic side of the membrane. The helical transmembrane segment at 78 to 98 (IIYFEIITTIAIVVGLLAANI) threads the bilayer. Residues 99–148 (FQPGAGVNMKSLEKTDIQSYVDTTNEVQHHSMVETFVNIVPKNIFESLST) are Extracellular-facing. A helical transmembrane segment spans residues 149-169 (GDMLPIIFFSVMFGLGVAAIG). Residues 170 to 198 (EKGKPVLQFFQGTAEAMFYVTNQIMKFAP) are Cytoplasmic-facing. Residues 199–219 (FGVFALIGVTVSKFGVESLIP) form a helical membrane-spanning segment. The Extracellular segment spans residues 220 to 222 (LSK). The helical transmembrane segment at 223–243 (LVIVVYATMLFFIFAVLGGVA) threads the bilayer. K244 is a topological domain (cytoplasmic). A helical membrane pass occupies residues 245–265 (LFGINIFHIIKILKDELILAY). The Extracellular segment spans residues 266-306 (STASSETVLPRIMDKMEKFGCPKAITSFVIPTGYSFNLDGS). Residues 307-327 (TLYQALAAIFIAQLYGIDMSV) form a helical membrane-spanning segment. Residues 328-330 (SQQ) lie on the Cytoplasmic side of the membrane. 2 consecutive transmembrane segments (helical) span residues 331 to 351 (ISLL…PGVS) and 352 to 372 (FVVL…LAFI). Over 373 to 421 (AGIDRILDMARTAVNVIGNSLAAIIMSKWEGQYNEEKGKQYLAELQQSA) the chain is Cytoplasmic.

It belongs to the dicarboxylate/amino acid:cation symporter (DAACS) (TC 2.A.23) family. In terms of assembly, homotrimer.

The protein localises to the cell membrane. This carrier protein is part of the Na(+)-dependent, binding-protein-independent glutamate-aspartate transport system. The chain is Proton/sodium-glutamate symport protein (gltT) from Bacillus caldotenax.